The chain runs to 385 residues: Palmitoyl-[acyl-carrier-protein] 4-desaturase, chloroplastic (385 aa).

The transit peptide at 1–36 directs the protein to the chloroplast; the sequence is MAMKLNALMTLQCPKRNMFTRIAPPQAGRVRSKVSM. Fe cation-binding residues include Glu-126, Glu-164, His-167, Glu-217, Glu-250, and His-253.

This sequence belongs to the fatty acid desaturase type 2 family. Homodimer. Requires Fe(2+) as cofactor. As to expression, found only in tissues which synthesize petroselinic acid, such as developing seeds.

It is found in the plastid. It localises to the chloroplast. The enzyme catalyses hexadecanoyl-[ACP] + 2 reduced [2Fe-2S]-[ferredoxin] + O2 + 2 H(+) = (4Z)-hexadecenoyl-[ACP] + 2 oxidized [2Fe-2S]-[ferredoxin] + 2 H2O. In terms of biological role, converts palmitoyl-ACP to (4Z)-hexadec-4-enoyl-ACP by introduction of a cis double bond between carbons 4 and 5 of the acyl chain. In Coriandrum sativum (Coriander), this protein is Palmitoyl-[acyl-carrier-protein] 4-desaturase, chloroplastic.